Reading from the N-terminus, the 82-residue chain is Exodeoxyribonuclease 7 small subunit (82 aa).

The protein belongs to the XseB family. In terms of assembly, heterooligomer composed of large and small subunits.

Its subcellular location is the cytoplasm. It carries out the reaction Exonucleolytic cleavage in either 5'- to 3'- or 3'- to 5'-direction to yield nucleoside 5'-phosphates.. Functionally, bidirectionally degrades single-stranded DNA into large acid-insoluble oligonucleotides, which are then degraded further into small acid-soluble oligonucleotides. The chain is Exodeoxyribonuclease 7 small subunit from Colwellia psychrerythraea (strain 34H / ATCC BAA-681) (Vibrio psychroerythus).